The chain runs to 402 residues: CinA-like protein (402 aa).

It belongs to the CinA family.

This is CinA-like protein from Escherichia coli O17:K52:H18 (strain UMN026 / ExPEC).